Reading from the N-terminus, the 165-residue chain is Deoxyuridine 5'-triphosphate nucleotidohydrolase (165 aa).

Substrate is bound by residues 66 to 68 (RSG), Asn79, 83 to 85 (TVD), and Lys93. The interval 134–165 (ETSRGAGGHGSSGGHASLTPGARSAARVAQEG) is disordered.

It belongs to the dUTPase family. It depends on Mg(2+) as a cofactor.

The catalysed reaction is dUTP + H2O = dUMP + diphosphate + H(+). It participates in pyrimidine metabolism; dUMP biosynthesis; dUMP from dCTP (dUTP route): step 2/2. This enzyme is involved in nucleotide metabolism: it produces dUMP, the immediate precursor of thymidine nucleotides and it decreases the intracellular concentration of dUTP so that uracil cannot be incorporated into DNA. The sequence is that of Deoxyuridine 5'-triphosphate nucleotidohydrolase from Nocardia farcinica (strain IFM 10152).